We begin with the raw amino-acid sequence, 174 residues long: Large ribosomal subunit protein bL17 (174 aa).

The protein belongs to the bacterial ribosomal protein bL17 family. In terms of assembly, part of the 50S ribosomal subunit. Contacts protein L32.

The chain is Large ribosomal subunit protein bL17 from Acetivibrio thermocellus (strain ATCC 27405 / DSM 1237 / JCM 9322 / NBRC 103400 / NCIMB 10682 / NRRL B-4536 / VPI 7372) (Clostridium thermocellum).